A 1031-amino-acid polypeptide reads, in one-letter code: Probable ATP-dependent RNA helicase DDX46 (1031 aa).

Over residues 1–24 (MGRESRHYRKRSASRGRSGSRSRS) the composition is skewed to basic residues. Residues 1–228 (MGRESRHYRK…EMEGEELDPL (228 aa)) are disordered. The N-myristoyl glycine moiety is linked to residue Gly-2. Residues 26-49 (SPSDKRSKRGDDRRSRSRDRDRRR) are compositionally biased toward basic and acidic residues. Composition is skewed to basic residues over residues 50 to 73 (ERSR…RSRS) and 81 to 103 (ERRR…RRSR). Positions 112–200 (KKTENRSRSK…EMKQGKKWSL (89 aa)) are enriched in basic and acidic residues. A coiled-coil region spans residues 152–197 (DQNKLEEEMRKRKERVEKWREEQRKKAMENIGELKKEIEEMKQGKK). Lys-186 is covalently cross-linked (Glycyl lysine isopeptide (Lys-Gly) (interchain with G-Cter in SUMO2)). Ser-199 is subject to Phosphoserine. 2 stretches are compositionally biased toward acidic residues: residues 201-211 (EDDDDDEDDPA) and 219-228 (EMEGEELDPL). The residue at position 263 (Lys-263) is an N6-acetyllysine. Residue Tyr-294 is modified to Phosphotyrosine. A phosphoserine mark is found at Ser-295 and Ser-296. A Glycyl lysine isopeptide (Lys-Gly) (interchain with G-Cter in SUMO2) cross-link involves residue Lys-325. The residue at position 346 (Ser-346) is a Phosphoserine. The Q motif signature appears at 372–400 (KSWVQCGISMKILNSLKKHGYEKPTPIQT). Residues 403–581 (IPAIMSGRDL…RRILSKPIEV (179 aa)) form the Helicase ATP-binding domain. 416–423 (AKTGSGKT) is a binding site for ATP. A DEAD box motif is present at residues 529 to 532 (DEAD). Residues 592-753 (DVEQQVIVIE…AVPPDLEKLW (162 aa)) form the Helicase C-terminal domain. Residue Lys-776 is modified to N6-acetyllysine. A Glycyl lysine isopeptide (Lys-Gly) (interchain with G-Cter in SUMO2) cross-link involves residue Lys-779. Residue Ser-804 is modified to Phosphoserine. Residue Lys-903 is modified to N6-acetyllysine. Residues Lys-907 and Lys-915 each participate in a glycyl lysine isopeptide (Lys-Gly) (interchain with G-Cter in SUMO2) cross-link. At Ser-928 the chain carries Phosphoserine.

This sequence belongs to the DEAD box helicase family. DDX46/PRP5 subfamily. As to quaternary structure, component of the 17S U2 SnRNP complex, a ribonucleoprotein complex that contains small nuclear RNA (snRNA) U2 and a number of specific proteins. Within the 17S U2 SnRNP complex, DDX46 is part of the SF3B subcomplex, which is required for 'A' complex assembly formed by the stable binding of U2 snRNP to the branchpoint sequence in pre-mRNA. Recruited to the 17S U2 SnRNP complex following release of DDX42; DDX42 and DDX46 bind the SF3B subcomplex in a competitive manner.

It is found in the nucleus speckle. The protein resides in the nucleus. The protein localises to the cajal body. It carries out the reaction ATP + H2O = ADP + phosphate + H(+). Component of the 17S U2 SnRNP complex of the spliceosome, a large ribonucleoprotein complex that removes introns from transcribed pre-mRNAs. The 17S U2 SnRNP complex (1) directly participates in early spliceosome assembly and (2) mediates recognition of the intron branch site during pre-mRNA splicing by promoting the selection of the pre-mRNA branch-site adenosine, the nucleophile for the first step of splicing. Within the 17S U2 SnRNP complex, DDX46 plays essential roles during assembly of pre-spliceosome and proofreading of the branch site. This chain is Probable ATP-dependent RNA helicase DDX46, found in Homo sapiens (Human).